Reading from the N-terminus, the 373-residue chain is RNA 3'-terminal phosphate cyclase-like protein (373 aa).

This sequence belongs to the RNA 3'-terminal cyclase family. Type 2 subfamily. Part of the small subunit (SSU) processome, composed of more than 70 proteins and the RNA chaperone small nucleolar RNA (snoRNA) U3. Interacts with BMS1.

Its subcellular location is the nucleus. The protein resides in the nucleolus. As part of the small subunit (SSU) processome, it plays a role in 40S-ribosomal-subunit biogenesis in the early pre-rRNA processing steps at sites A0, A1 and A2 that are required for proper maturation of the 18S RNA. Activates BMS1 by promoting GDP/GTP exchange. Does not have cyclase activity. This chain is RNA 3'-terminal phosphate cyclase-like protein (Rcl1), found in Mus musculus (Mouse).